The chain runs to 363 residues: MKFVDEAFIDVAAGDGGNGCVSFRHEKYKEFGGPNGGDGGRGGHVFAVADPNLNTLVDFRYARRHEAKRGGHGMGSDMFGAAGADITLKMPVGTIITDAATGQPLYELLLPGEVITIARGGDGGFGNMRFKSAINRAPRHKTPGWPGEKKSLKLELKVLADVGLLGRPNAGKSTFIAAVSNARPKIADYPFTTLHPHLGVVRVAPEQSFVVADIPGLIEGASEGAGLGLQFLRHLQRTRLLLHIVDLAALDTGVDAQDAGVDPVAQAKAIINELKKYDRQLYDKPRWLVLNKLDMVPAGERQARVQDFVKRLKHQGPVFEISALTHEGCGPLVHAIFGHVQSGQRMDNEPPPLDPRFASAGPA.

The region spanning 1–159 (MKFVDEAFID…KSLKLELKVL (159 aa)) is the Obg domain. The OBG-type G domain occupies 160-341 (ADVGLLGRPN…LVHAIFGHVQ (182 aa)). Residues 166 to 173 (GRPNAGKS), 191 to 195 (FTTLH), 213 to 216 (DIPG), 291 to 294 (NKLD), and 322 to 324 (SAL) contribute to the GTP site. Ser173 and Thr193 together coordinate Mg(2+). Positions 343–363 (GQRMDNEPPPLDPRFASAGPA) are disordered.

The protein belongs to the TRAFAC class OBG-HflX-like GTPase superfamily. OBG GTPase family. In terms of assembly, monomer. Mg(2+) serves as cofactor.

Its subcellular location is the cytoplasm. An essential GTPase which binds GTP, GDP and possibly (p)ppGpp with moderate affinity, with high nucleotide exchange rates and a fairly low GTP hydrolysis rate. Plays a role in control of the cell cycle, stress response, ribosome biogenesis and in those bacteria that undergo differentiation, in morphogenesis control. This chain is GTPase Obg, found in Verminephrobacter eiseniae (strain EF01-2).